A 162-amino-acid polypeptide reads, in one-letter code: Transcription antitermination protein NusB (162 aa).

The protein belongs to the NusB family.

In terms of biological role, involved in transcription antitermination. Required for transcription of ribosomal RNA (rRNA) genes. Binds specifically to the boxA antiterminator sequence of the ribosomal RNA (rrn) operons. The chain is Transcription antitermination protein NusB from Mycobacterium sp. (strain JLS).